We begin with the raw amino-acid sequence, 808 residues long: Phospholipase D alpha 1 (808 aa).

In terms of domain architecture, C2 spans 1 to 125 (MSKVLLHGTL…LDGDEVDKWI (125 aa)). Residue aspartate 186 participates in Ca(2+) binding. The PLD phosphodiesterase 1 domain maps to 326–364 (TMFTHHQKIVVVDHELPRGGSQKRRVMSFVGGIDLCDGR). Residues histidine 331, lysine 333, and aspartate 338 contribute to the active site. Residue histidine 331 coordinates a 1,2-diacyl-sn-glycero-3-phosphate. Ca(2+) is bound by residues histidine 370 and histidine 404. A 1,2-diacyl-sn-glycero-3-phosphate is bound by residues glutamine 520 and histidine 659. The 28-residue stretch at 654–681 (FMIYVHSKMMIVDDEYIIVGSANINQRS) folds into the PLD phosphodiesterase 2 domain. Active-site residues include histidine 659, lysine 661, and aspartate 666. Glutamate 720 is a Ca(2+) binding site.

It belongs to the phospholipase D family. C2-PLD subfamily. As to quaternary structure, interacts (via C2 domain) with CARDA (via RGD or KGE motifs). The cofactor is Ca(2+).

It carries out the reaction a 1,2-diacyl-sn-glycero-3-phosphocholine + H2O = a 1,2-diacyl-sn-glycero-3-phosphate + choline + H(+). Functionally, hydrolyzes glycerol-phospholipids at the terminal phosphodiesteric bond. Plays an important role in various cellular processes. This is Phospholipase D alpha 1 from Cynara cardunculus (Cardoon).